The sequence spans 417 residues: UDP-N-acetylglucosamine 1-carboxyvinyltransferase 2 (417 aa).

22–23 contributes to the phosphoenolpyruvate binding site; sequence KN. Arginine 94 contacts UDP-N-acetyl-alpha-D-glucosamine. Cysteine 118 acts as the Proton donor in catalysis. Cysteine 118 bears the 2-(S-cysteinyl)pyruvic acid O-phosphothioketal mark. Residues 123–127, aspartate 306, and isoleucine 328 contribute to the UDP-N-acetyl-alpha-D-glucosamine site; that span reads RPIDL.

The protein belongs to the EPSP synthase family. MurA subfamily.

The protein localises to the cytoplasm. It carries out the reaction phosphoenolpyruvate + UDP-N-acetyl-alpha-D-glucosamine = UDP-N-acetyl-3-O-(1-carboxyvinyl)-alpha-D-glucosamine + phosphate. Its pathway is cell wall biogenesis; peptidoglycan biosynthesis. Its function is as follows. Cell wall formation. Adds enolpyruvyl to UDP-N-acetylglucosamine. The polypeptide is UDP-N-acetylglucosamine 1-carboxyvinyltransferase 2 (Clostridium tetani (strain Massachusetts / E88)).